Reading from the N-terminus, the 296-residue chain is 33 kDa chaperonin (296 aa).

Intrachain disulfides connect C233/C235 and C267/C270.

This sequence belongs to the HSP33 family. In terms of processing, under oxidizing conditions two disulfide bonds are formed involving the reactive cysteines. Under reducing conditions zinc is bound to the reactive cysteines and the protein is inactive.

Its subcellular location is the cytoplasm. Functionally, redox regulated molecular chaperone. Protects both thermally unfolding and oxidatively damaged proteins from irreversible aggregation. Plays an important role in the bacterial defense system toward oxidative stress. In Actinobacillus pleuropneumoniae serotype 5b (strain L20), this protein is 33 kDa chaperonin.